A 447-amino-acid polypeptide reads, in one-letter code: Elongation factor 1-alpha (447 aa).

The tr-type G domain occupies 5 to 230 (KIHISIVVIG…DQINEPKRPS (226 aa)). Positions 14-21 (GHVDSGKS) are G1. 14-21 (GHVDSGKS) contributes to the GTP binding site. The residue at position 55 (lysine 55) is an N6,N6-dimethyllysine. The segment at 70–74 (GITID) is G2. Residue lysine 79 is modified to N6,N6,N6-trimethyllysine. A G3 region spans residues 91–94 (DAPG). Residues 91–95 (DAPGH) and 153–156 (NKMD) each bind GTP. Positions 153–156 (NKMD) are G4. Lysine 187 carries the post-translational modification N6,N6,N6-trimethyllysine. The tract at residues 194–196 (SGF) is G5. Lysine 261 is subject to N6-methyllysine. A 5-glutamyl glycerylphosphorylethanolamine modification is found at glutamate 289. At lysine 306 the chain carries N6,N6,N6-trimethyllysine. The residue at position 362 (glutamate 362) is a 5-glutamyl glycerylphosphorylethanolamine. The residue at position 396 (lysine 396) is an N6,N6,N6-trimethyllysine.

This sequence belongs to the TRAFAC class translation factor GTPase superfamily. Classic translation factor GTPase family. EF-Tu/EF-1A subfamily.

The protein localises to the cytoplasm. Its function is as follows. This protein promotes the GTP-dependent binding of aminoacyl-tRNA to the A-site of ribosomes during protein biosynthesis. The protein is Elongation factor 1-alpha (BLT63) of Hordeum vulgare (Barley).